The sequence spans 305 residues: UDP-3-O-acyl-N-acetylglucosamine deacetylase (305 aa).

3 residues coordinate Zn(2+): histidine 78, histidine 237, and aspartate 241. Catalysis depends on histidine 264, which acts as the Proton donor.

Belongs to the LpxC family. The cofactor is Zn(2+).

The catalysed reaction is a UDP-3-O-[(3R)-3-hydroxyacyl]-N-acetyl-alpha-D-glucosamine + H2O = a UDP-3-O-[(3R)-3-hydroxyacyl]-alpha-D-glucosamine + acetate. It participates in glycolipid biosynthesis; lipid IV(A) biosynthesis; lipid IV(A) from (3R)-3-hydroxytetradecanoyl-[acyl-carrier-protein] and UDP-N-acetyl-alpha-D-glucosamine: step 2/6. Functionally, catalyzes the hydrolysis of UDP-3-O-myristoyl-N-acetylglucosamine to form UDP-3-O-myristoylglucosamine and acetate, the committed step in lipid A biosynthesis. The chain is UDP-3-O-acyl-N-acetylglucosamine deacetylase from Burkholderia thailandensis (strain ATCC 700388 / DSM 13276 / CCUG 48851 / CIP 106301 / E264).